Reading from the N-terminus, the 252-residue chain is Sulfoacetaldehyde reductase 2 (252 aa).

6-30 (LITGATSGFGRAAARRFADAGWSLI) is an NADP(+) binding site. S139 is a binding site for substrate. The active-site Proton acceptor is Y152.

It belongs to the short-chain dehydrogenases/reductases (SDR) family. In terms of assembly, homodimer and heterotetramer.

It carries out the reaction 2-hydroxyethane-1-sulfonate + NADP(+) = sulfoacetaldehyde + NADPH + H(+). Its pathway is organosulfur degradation. Catalyzes the formation of isethionate from 2-sulfoacetaldehyde in the deaminative pathway of taurine. Constitutively expressed enzyme that only mediates a small part of the activity observed in taurine-grown cells. The polypeptide is Sulfoacetaldehyde reductase 2 (isfD2) (Chromohalobacter salexigens (strain ATCC BAA-138 / DSM 3043 / CIP 106854 / NCIMB 13768 / 1H11)).